Here is a 240-residue protein sequence, read N- to C-terminus: Adenylate dimethylallyltransferase (240 aa).

The protein belongs to the isopentenyl transferase family.

The catalysed reaction is dimethylallyl diphosphate + AMP = N(6)-(dimethylallyl)adenosine 5'-phosphate + diphosphate. Transfers dimethylallyl groups to AMP as part of the biosynthesis of cytokinin phytohormones. The polypeptide is Adenylate dimethylallyltransferase (izt) (Agrobacterium fabrum (strain C58 / ATCC 33970) (Agrobacterium tumefaciens (strain C58))).